The primary structure comprises 265 residues: L-histidine 2-aminobutanoyltransferase (265 aa).

Belongs to the methyltransferase superfamily. CntL family.

The enzyme catalyses L-histidine + S-adenosyl-L-methionine = (2S)-2-amino-4-{[(1S)-1-carboxy-2-(1H-imidazol-4-yl)ethyl]amino}butanoate + S-methyl-5'-thioadenosine + H(+). Its function is as follows. Catalyzes the nucleophilic attack of one alpha-aminobutanoate moiety from SAM onto L-histidine to produce the intermediate (2S)-2-amino-4-{[(1S)-1-carboxy-2-(1H-imidazol-4-yl)ethyl]amino}butanoate. Functions in the biosynthesis of the metallophore yersinopine, which is involved in metal acquisition and thus enables bacterial growth inside the host, where metal access is limited. Therefore, this enzyme probably contributes to Yersinia virulence. This is L-histidine 2-aminobutanoyltransferase from Yersinia pestis.